The primary structure comprises 390 residues: COP9/Signalosome and eIF3 complex-shared subunit 1 (390 aa).

The region spanning 188–351 is the PCI domain; the sequence is QAAKVMTALL…RTLIVSSYQH (164 aa).

The protein belongs to the eIF-3 subunit M family. Component of the eukaryotic translation initiation factor 3 (eIF-3) complex. Within the eIF-3 complex, interacts directly with eif-3.F. Component of the CSN complex, composed of csn-1, csn-2, csn-3, csn-4, csn-5, csn-6 and csn-7. Within the CSN complex, interacts directly with csn-1 and csn-4.

It is found in the cytoplasm. Component of the eukaryotic translation initiation factor 3 (eIF-3) complex, which is involved in protein synthesis of a specialized repertoire of mRNAs and, together with other initiation factors, stimulates binding of mRNA and methionyl-tRNAi to the 40S ribosome. The eIF-3 complex specifically targets and initiates translation of a subset of mRNAs involved in cell proliferation (Potential). Component of the COP9 signalosome complex (CSN), a complex involved in various cellular and developmental processes. The CSN complex is an essential regulator of the ubiquitin (Ubl) conjugation pathway by mediating the deneddylation of the cullin subunits of the SCF-type E3 ligase complexes, leading to decrease the Ubl ligase activity of SCF. The CSN complex plays an essential role in embryogenesis and oogenesis and is required to regulate microtubule stability in the early embryo. Mediates mei-1 targeting for degradation at the meiosis to mitosis transition via deneddylation of cul-3. The polypeptide is COP9/Signalosome and eIF3 complex-shared subunit 1 (Caenorhabditis elegans).